Here is a 453-residue protein sequence, read N- to C-terminus: Chromosomal replication initiator protein DnaA (453 aa).

The segment at 1–74 (MKEKQFWNRI…GFEIYDAEIT (74 aa)) is domain I, interacts with DnaA modulators. A domain II region spans residues 74–113 (TPHYIFTKPQDTTSSQVEEATNLTLYDYSPKLVSIPYSDT). The domain III, AAA+ region stretch occupies residues 114-331 (GLKEKYTFDN…GAINDITLIA (218 aa)). ATP is bound by residues Gly-158, Gly-160, Lys-161, and Thr-162. A domain IV, binds dsDNA region spans residues 332 to 453 (RVKKIKDITI…EIESIKKKIK (122 aa)).

It belongs to the DnaA family. Oligomerizes as a right-handed, spiral filament on DNA at oriC.

Its subcellular location is the cytoplasm. Plays an essential role in the initiation and regulation of chromosomal replication. ATP-DnaA binds to the origin of replication (oriC) to initiate formation of the DNA replication initiation complex once per cell cycle. Binds the DnaA box (a 9 base pair repeat at the origin) and separates the double-stranded (ds)DNA. Forms a right-handed helical filament on oriC DNA; dsDNA binds to the exterior of the filament while single-stranded (ss)DNA is stabiized in the filament's interior. The ATP-DnaA-oriC complex binds and stabilizes one strand of the AT-rich DNA unwinding element (DUE), permitting loading of DNA polymerase. After initiation quickly degrades to an ADP-DnaA complex that is not apt for DNA replication. Binds acidic phospholipids. The sequence is that of Chromosomal replication initiator protein DnaA from Streptococcus pneumoniae (strain P1031).